We begin with the raw amino-acid sequence, 332 residues long: Gibberellin 2-beta-dioxygenase (332 aa).

In terms of domain architecture, Fe2OG dioxygenase spans 175–280 (KSDSCFRLNH…RLSMIYFGGP (106 aa)). His-204, Asp-206, and His-261 together coordinate Fe cation. Arg-271 is an active-site residue.

This sequence belongs to the iron/ascorbate-dependent oxidoreductase family. GA2OX subfamily. Fe cation serves as cofactor.

It carries out the reaction gibberellin A1 + 2-oxoglutarate + O2 = gibberellin A8 + succinate + CO2. Its pathway is plant hormone biosynthesis; gibberellin biosynthesis. In terms of biological role, catalyzes the 2-beta-hydroxylation of several biologically active gibberellins, leading to the homeostatic regulation of their endogenous level. Catabolism of gibberellins (GAs) plays a central role in plant development. Converts GA9/GA20 to GA51/GA29 and GA4/GA1 to GA34/GA8. The polypeptide is Gibberellin 2-beta-dioxygenase (GA2OX1) (Phaseolus coccineus (Scarlet runner bean)).